The sequence spans 493 residues: Cytochrome P450 2W1 (493 aa).

The signal sequence occupies residues 1-23 (MALLLLGVWGILLLLGLWGLLQG). The N-linked (GlcNAc...) asparagine glycan is linked to Asn-180. Cys-436 provides a ligand contact to heme.

This sequence belongs to the cytochrome P450 family. The cofactor is heme. In terms of tissue distribution, detected in colon, ileum, and testes.

It localises to the endoplasmic reticulum lumen. It is found in the cell membrane. Its subcellular location is the microsome membrane. The enzyme catalyses all-trans-retinoate + reduced [NADPH--hemoprotein reductase] + O2 = all-trans-4-hydroxyretinoate + oxidized [NADPH--hemoprotein reductase] + H2O + H(+). The catalysed reaction is 1-(9Z-octadecenoyl)-sn-glycero-3-phosphocholine + reduced [NADPH--hemoprotein reductase] + O2 = 1-[8-hydroxy-(9Z)-octadecenoyl]-sn-glycero-3-phosphocholine + oxidized [NADPH--hemoprotein reductase] + H2O + H(+). It catalyses the reaction 1-(9Z-octadecenoyl)-sn-glycero-3-phosphocholine + reduced [NADPH--hemoprotein reductase] + O2 = 1-[11-hydroxy-(9Z)-octadecenoyl]-sn-glycero-3-phosphocholine + oxidized [NADPH--hemoprotein reductase] + H2O + H(+). It carries out the reaction 1-(9Z-octadecenoyl)-sn-glycero-3-phosphocholine + reduced [NADPH--hemoprotein reductase] + O2 = 1-[(9S,10R)-epoxy-octadecanoyl]-sn-glycero-3-phosphocholine + oxidized [NADPH--hemoprotein reductase] + H2O + H(+). The enzyme catalyses 1-(9Z-octadecenoyl)-sn-glycero-3-phosphocholine + reduced [NADPH--hemoprotein reductase] + O2 = 1-[(9R,10S)-epoxy-octadecanoyl]-sn-glycero-3-phosphocholine + oxidized [NADPH--hemoprotein reductase] + H2O + H(+). A cytochrome P450 monooxygenase that may play a role in retinoid and phospholipid metabolism. Catalyzes the hydroxylation of saturated carbon hydrogen bonds. Hydroxylates all trans-retinoic acid (atRA) to 4-hydroxyretinoate and may regulate atRA clearance. Other retinoids such as all-trans retinol and all-trans retinal are potential endogenous substrates. Catalyzes both epoxidation of double bonds and hydroxylation of carbon hydrogen bonds of the fatty acyl chain of 1-acylphospholipids/2-lysophospholipids. Can metabolize various lysophospholipids classes including lysophosphatidylcholines (LPCs), lysophosphatidylinositols (LPIs), lysophosphatidylserines (LPSs), lysophosphatidylglycerols (LPGs), lysophosphatidylethanolamines (LPEs) and lysophosphatidic acids (LPAs). Has low or no activity toward 2-acylphospholipids/1-lysophospholipids, diacylphospholipids and free fatty acids. May play a role in tumorigenesis by activating procarcinogens such as aflatoxin B1, polycyclic aromatic hydrocarbon dihydrodiols and aromatic amines. Mechanistically, uses molecular oxygen inserting one oxygen atom into a substrate, and reducing the second into a water molecule, with two electrons provided by NADPH via cytochrome P450 reductase (CPR; NADPH-ferrihemoprotein reductase). This is Cytochrome P450 2W1 (Cyp2w1) from Mus musculus (Mouse).